Consider the following 335-residue polypeptide: Protein-arginine kinase (335 aa).

Residues isoleucine 20 to isoleucine 243 enclose the Phosphagen kinase C-terminal domain. ATP-binding positions include serine 23–arginine 27, histidine 81, arginine 114, arginine 165–methionine 169, and arginine 196–glutamate 201.

Belongs to the ATP:guanido phosphotransferase family.

It catalyses the reaction L-arginyl-[protein] + ATP = N(omega)-phospho-L-arginyl-[protein] + ADP + H(+). In terms of biological role, catalyzes the specific phosphorylation of arginine residues in proteins. The sequence is that of Protein-arginine kinase from Staphylococcus haemolyticus (strain JCSC1435).